Here is a 229-residue protein sequence, read N- to C-terminus: Transmembrane 4 L6 family member 20 (229 aa).

Topologically, residues 1-14 (MTCCEGWTSCNGFS) are lumenal. A helical transmembrane segment spans residues 15–35 (LLVLLLLGVVLNAIPLIVSLV). Residues 36–44 (EEDQFSQNP) lie on the Cytoplasmic side of the membrane. Residues 45-65 (ISCFEWWFPGIIGAGLMAIPA) form a helical membrane-spanning segment. The Lumenal portion of the chain corresponds to 66-83 (TTMSLTARKRACCNNRTG). Residues 84–104 (MFLSSLFSVITVIGALYCMLI) traverse the membrane as a helical segment. Residues 105 to 185 (SIQALLKGPL…HFDSEENKHR (81 aa)) are Cytoplasmic-facing. Residues 186 to 206 (LIHFSVFLGLLLVGILEVLFG) form a helical membrane-spanning segment. The Lumenal portion of the chain corresponds to 207 to 229 (LSQIVIGFLGCLCGVSKRRSQIV).

Belongs to the L6 tetraspanin family. In terms of processing, glycosylated at Asn-132, Asn-148 and Asn-163 in presence of ceramide which inverts the orientation of TM4SF20 in membranes exposing these residues to the endoplasmic reticulum lumen. Post-translationally, cleaved by signal peptidase at Ser-14 but the peptide does not act as a signal peptide. Cleavage is inhibited by ceramide which inverts the orientation of TM4SF20 in membranes exposing the N-terminus to the cytosol and not to the endoplasmic reticulum lumen. Expressed in the brain, with high levels in the parietal lobe, hippocampus, pons, white matter and cerebellum.

It is found in the membrane. The protein resides in the endoplasmic reticulum membrane. Polytopic transmembrane protein that inhibits regulated intramembrane proteolysis (RIP) of CREB3L1, inhibiting its activation and the induction of collagen synthesis. In response to ceramide, which alters TM4SF20 membrane topology, stimulates RIP activation of CREB3L1. Ceramide reverses the direction through which transmembrane helices are translocated into the endoplasmic reticulum membrane during translation of TM4SF20, this mechanism is called 'regulated alternative translocation' (RAT) and regulates the function of the transmembrane protein. The polypeptide is Transmembrane 4 L6 family member 20 (TM4SF20) (Homo sapiens (Human)).